An 873-amino-acid polypeptide reads, in one-letter code: Protein translocase subunit SecA (873 aa).

Residues Gln85, 103-107 (GEGKT), and Asp492 each bind ATP. Residues 835-856 (RYAEEEGKQPIRKENQIGRNDD) show a composition bias toward basic and acidic residues. The interval 835-873 (RYAEEEGKQPIRKENQIGRNDDCPCGSGKKYKKCCGKNA) is disordered. Zn(2+)-binding residues include Cys857, Cys859, Cys868, and Cys869. The span at 863–873 (KKYKKCCGKNA) shows a compositional bias: basic residues.

It belongs to the SecA family. In terms of assembly, monomer and homodimer. Part of the essential Sec protein translocation apparatus which comprises SecA, SecYEG and auxiliary proteins SecDF. Other proteins may also be involved. It depends on Zn(2+) as a cofactor.

The protein localises to the cell membrane. It localises to the cytoplasm. The enzyme catalyses ATP + H2O + cellular proteinSide 1 = ADP + phosphate + cellular proteinSide 2.. Functionally, part of the Sec protein translocase complex. Interacts with the SecYEG preprotein conducting channel. Has a central role in coupling the hydrolysis of ATP to the transfer of proteins into and across the cell membrane, serving as an ATP-driven molecular motor driving the stepwise translocation of polypeptide chains across the membrane. The polypeptide is Protein translocase subunit SecA (Desulforamulus reducens (strain ATCC BAA-1160 / DSM 100696 / MI-1) (Desulfotomaculum reducens)).